The sequence spans 79 residues: Sec-independent protein translocase protein TatA (79 aa).

The helical transmembrane segment at 1-21 (MGGFTSIWHWVIVLLVIVLLF) threads the bilayer. The interval 48–79 (EEEAKNEPKTLDAQATQTKVHESSEIKSKQES) is disordered. Residues 66-79 (KVHESSEIKSKQES) show a composition bias toward basic and acidic residues.

This sequence belongs to the TatA/E family. The Tat system comprises two distinct complexes: a TatABC complex, containing multiple copies of TatA, TatB and TatC subunits, and a separate TatA complex, containing only TatA subunits. Substrates initially bind to the TatABC complex, which probably triggers association of the separate TatA complex to form the active translocon.

Its subcellular location is the cell inner membrane. Its function is as follows. Part of the twin-arginine translocation (Tat) system that transports large folded proteins containing a characteristic twin-arginine motif in their signal peptide across membranes. TatA could form the protein-conducting channel of the Tat system. This is Sec-independent protein translocase protein TatA from Helicobacter pylori (strain ATCC 700392 / 26695) (Campylobacter pylori).